The sequence spans 367 residues: Pepsin A (367 aa).

Residues 1-42 constitute a propeptide, activation peptide; it reads SIHRVPLKKGKSLRKQLKDHGLLEDFLKKHPYNPASKYHPVL. One can recognise a Peptidase A1 domain in the interval 59–364; sequence YYGTISIGTP…DRANNKVGLS (306 aa). The active site involves aspartate 77. Cysteines 90 and 95 form a disulfide. Asparagine 113 carries an N-linked (GlcNAc...) asparagine glycan. Cysteine 251 and cysteine 255 are joined by a disulfide. Aspartate 260 is a catalytic residue. A disulfide bridge connects residues cysteine 290 and cysteine 323.

The protein belongs to the peptidase A1 family.

It catalyses the reaction Preferential cleavage: hydrophobic, preferably aromatic, residues in P1 and P1' positions. Cleaves 1-Phe-|-Val-2, 4-Gln-|-His-5, 13-Glu-|-Ala-14, 14-Ala-|-Leu-15, 15-Leu-|-Tyr-16, 16-Tyr-|-Leu-17, 23-Gly-|-Phe-24, 24-Phe-|-Phe-25 and 25-Phe-|-Tyr-26 bonds in the B chain of insulin.. Functionally, shows particularly broad specificity; although bonds involving phenylalanine and leucine are preferred, many others are also cleaved to some extent. This is Pepsin A (PGA) from Gallus gallus (Chicken).